A 366-amino-acid polypeptide reads, in one-letter code: Zinc finger protein ubi-d4 B (366 aa).

2 disordered regions span residues 41 to 94 and 140 to 167; these read ASAP…DGSS and DDLDDEDYEEDTPKRRKGKSKGKGIGGA. Basic and acidic residues predominate over residues 76–86; it reads PDPEQMLKKEG. Residues 140–149 show a composition bias toward acidic residues; sequence DDLDDEDYEE. The segment at 183 to 206 adopts a C2H2-type zinc-finger fold; it reads YACDICGKRYKNRPGLSYHYAHSH. Positions 211–243 are disordered; that stretch reads EGAGAEDKEDSQPPTPIMHRSEEQKSKKGPDGL. The span at 229-240 shows a compositional bias: basic and acidic residues; the sequence is HRSEEQKSKKGP. 2 consecutive PHD-type zinc fingers follow at residues 247-307 and 304-354; these read NNYC…CKCC and CKCC…CLDL.

This sequence belongs to the requiem/DPF family.

Its subcellular location is the cytoplasm. It is found in the nucleus. Functionally, may be a transcription factor required for the apoptosis response following survival factor withdrawal from myeloid cells. Might also have a role in the development and maturation of lymphoid cells. This Xenopus laevis (African clawed frog) protein is Zinc finger protein ubi-d4 B (req-b).